Consider the following 196-residue polypeptide: ATP-dependent Clp protease proteolytic subunit (196 aa).

The active-site Nucleophile is serine 98. Residue histidine 123 is part of the active site.

It belongs to the peptidase S14 family. As to quaternary structure, fourteen ClpP subunits assemble into 2 heptameric rings which stack back to back to give a disk-like structure with a central cavity, resembling the structure of eukaryotic proteasomes.

The protein resides in the cytoplasm. The catalysed reaction is Hydrolysis of proteins to small peptides in the presence of ATP and magnesium. alpha-casein is the usual test substrate. In the absence of ATP, only oligopeptides shorter than five residues are hydrolyzed (such as succinyl-Leu-Tyr-|-NHMec, and Leu-Tyr-Leu-|-Tyr-Trp, in which cleavage of the -Tyr-|-Leu- and -Tyr-|-Trp bonds also occurs).. Its function is as follows. Cleaves peptides in various proteins in a process that requires ATP hydrolysis. Has a chymotrypsin-like activity. Plays a major role in the degradation of misfolded proteins. The sequence is that of ATP-dependent Clp protease proteolytic subunit from Geobacillus sp. (strain WCH70).